A 433-amino-acid polypeptide reads, in one-letter code: MDMTKNHTTDTEEFDDGDIRPVSLGIVDDYNASFELPLKPKFLQSENFSDLTSEWDQSRSNTPGLAEGKTEKAQPCGTTDSSKNRIHVEQLLESANEMNNYLAQNIENINNFQVGLLNGGKGLYSSMGDDSSACINGTNFSSTSNFELSDDELEDTTGCTSSIFDKDLFHQQNGLSIPRRRSPLFKSPTASFEIGDATDVEEQDIDDSIFSECSSITSFDMGGLHISLPHDEEEDQEKTKSESENPLLHGIPVDVEVPHISVDEALANFKETIELLLKLSGNRKCTGFNTRVEKKEYSNFYMKSKPTLSSADFLKRIQDKCEYQPTVYLVATFLIDTLFLTRDGNNILQLKLNLQEKEVHRMIIAAVRLSTKLLEDFVHSHEYFSKVCGISKRLLTKLEVSLLICVCNTKLMVSNRKLAASKLLLNELRSFCV.

The span at 1 to 10 (MDMTKNHTTD) shows a compositional bias: basic and acidic residues. Disordered stretches follow at residues 1–20 (MDMT…GDIR) and 51–81 (LTSE…TTDS). A compositionally biased stretch (polar residues) spans 51–63 (LTSEWDQSRSNTP).

The protein belongs to the cyclin family. PHO80 subfamily. Forms a cyclin-CDK complex with PHO85. Interacts with GSY2, independent of the presence of PHO85.

The protein localises to the cytoplasm. Its function is as follows. Cyclin partner of the cyclin-dependent kinase (CDK) PHO85. Together with cyclin PCL8, negatively controls glycogen accumulation under favorable growth conditions. The PCL10-PHO85 cyclin-CDK holoenzyme has glycogen synthase kinase activity and phosphorylates and negatively regulates glycogen synthase GSY2. Also has minor GLC8 kinase activity. The chain is PHO85 cyclin-10 (PCL10) from Saccharomyces cerevisiae (strain ATCC 204508 / S288c) (Baker's yeast).